Reading from the N-terminus, the 132-residue chain is Agouti-signaling protein (132 aa).

The N-terminal stretch at 1 to 22 (MDVTRLLLATLLVFLCFFTANS) is a signal peptide. The N-linked (GlcNAc...) asparagine glycan is linked to N39. The tract at residues 61 to 87 (QIGRKEAEKKRSSKKEASMKKVARPRT) is disordered. The segment covering 63-79 (GRKEAEKKRSSKKEASM) has biased composition (basic and acidic residues). 5 cysteine pairs are disulfide-bonded: C93–C108, C100–C114, C107–C125, C111–C132, and C116–C123. Residues 93–132 (CVATRNSCKPPAPACCDPCASCQCRFFRSACSCRVLSLNC) form the Agouti domain.

The protein localises to the secreted. Its function is as follows. Involved in the regulation of melanogenesis. The binding of ASP to MC1R precludes alpha-MSH initiated signaling and thus blocks production of cAMP, leading to a down-regulation of eumelanogenesis (brown/black pigment) and thus increasing synthesis of pheomelanin (yellow/red pigment). The sequence is that of Agouti-signaling protein (ASIP) from Gorilla gorilla gorilla (Western lowland gorilla).